The sequence spans 351 residues: Transmembrane protein 255A (351 aa).

4 helical membrane-spanning segments follow: residues 30–50 (IYVT…GLAA), 57–77 (VTVG…LGII), 89–109 (LVAS…CAIV), and 226–246 (TILN…LGGF). The disordered stretch occupies residues 302–331 (FPSSPPSGLSDEQEPQSPSPSPSYMWSSSA).

The protein belongs to the TMEM255 family.

It localises to the membrane. The polypeptide is Transmembrane protein 255A (Tmem255a) (Mus musculus (Mouse)).